A 228-amino-acid chain; its full sequence is Cytidylate kinase (228 aa).

17–25 (GPSASGKGT) is a binding site for ATP.

It belongs to the cytidylate kinase family. Type 1 subfamily.

The protein resides in the cytoplasm. It catalyses the reaction CMP + ATP = CDP + ADP. The catalysed reaction is dCMP + ATP = dCDP + ADP. The polypeptide is Cytidylate kinase (Paraburkholderia phytofirmans (strain DSM 17436 / LMG 22146 / PsJN) (Burkholderia phytofirmans)).